We begin with the raw amino-acid sequence, 340 residues long: Agmatinase, mitochondrial (340 aa).

Positions 150, 173, 175, 177, 264, and 266 each coordinate Mn(2+).

This sequence belongs to the arginase family. Agmatinase subfamily. The cofactor is Mn(2+).

It is found in the mitochondrion. The enzyme catalyses agmatine + H2O = urea + putrescine. It participates in amine and polyamine biosynthesis; putrescine biosynthesis via agmatine pathway; putrescine from agmatine: step 1/1. The polypeptide is Agmatinase, mitochondrial (AGMAT) (Gallus gallus (Chicken)).